The sequence spans 126 residues: C-type natriuretic peptide (126 aa).

The first 23 residues, 1-23 (MHLSQLLACALLLTLLSLRPSEA), serve as a signal peptide directing secretion. The segment at 20–71 (PSEAKPGAPPKVPRTPPAEELAEPQAAGGGQKKGDKAPGGGGANLKGDRSRL) is disordered. The propeptide occupies 24–73 (KPGAPPKVPRTPPAEELAEPQAAGGGQKKGDKAPGGGGANLKGDRSRLLR). Residues 26–35 (GAPPKVPRTP) show a composition bias toward pro residues. The segment covering 46 to 63 (AGGGQKKGDKAPGGGGAN) has biased composition (gly residues). Cysteines 110 and 126 form a disulfide.

The protein belongs to the natriuretic peptide family. Post-translationally, degraded by IDE (in vitro). In the kidney, predominantly expressed in the distal tubular cells (at protein level).

It is found in the secreted. In terms of biological role, hormone which plays a role in endochondral ossification through regulation of cartilaginous growth plate chondrocytes proliferation and differentiation. May also be vasoactive and natriuretic. Acts by specifically binding and stimulating NPR2 to produce cGMP. Binds the clearance receptor NPR3. This is C-type natriuretic peptide (NPPC) from Homo sapiens (Human).